The primary structure comprises 652 residues: Acetyl-coenzyme A synthetase (652 aa).

CoA is bound by residues Arg191–Arg194, Thr311, and Asn335. Residues Gly387–Pro389, Asp411–Thr416, Asp500, and Arg515 contribute to the ATP site. Residue Ser523 coordinates CoA. Arg526 lines the ATP pocket. Positions 537, 539, and 542 each coordinate Mg(2+). Arg584 lines the CoA pocket. Position 609 is an N6-acetyllysine (Lys609).

Belongs to the ATP-dependent AMP-binding enzyme family. It depends on Mg(2+) as a cofactor. Acetylated. Deacetylation by the SIR2-homolog deacetylase activates the enzyme.

It carries out the reaction acetate + ATP + CoA = acetyl-CoA + AMP + diphosphate. Functionally, catalyzes the conversion of acetate into acetyl-CoA (AcCoA), an essential intermediate at the junction of anabolic and catabolic pathways. Acs undergoes a two-step reaction. In the first half reaction, Acs combines acetate with ATP to form acetyl-adenylate (AcAMP) intermediate. In the second half reaction, it can then transfer the acetyl group from AcAMP to the sulfhydryl group of CoA, forming the product AcCoA. Enables the cell to use acetate during aerobic growth to generate energy via the TCA cycle, and biosynthetic compounds via the glyoxylate shunt. Acetylates CheY, the response regulator involved in flagellar movement and chemotaxis. The chain is Acetyl-coenzyme A synthetase from Yersinia pestis.